We begin with the raw amino-acid sequence, 842 residues long: Elongation factor 2 (842 aa).

The region spanning Thr17–Val346 is the tr-type G domain. Residues Ala26 to Ser33, Asn158 to Asp161, and Ser213 to Leu215 each bind GTP. At His699 the chain carries Diphthamide.

Belongs to the TRAFAC class translation factor GTPase superfamily. Classic translation factor GTPase family. EF-G/EF-2 subfamily.

It localises to the cytoplasm. The enzyme catalyses GTP + H2O = GDP + phosphate + H(+). Functionally, catalyzes the GTP-dependent ribosomal translocation step during translation elongation. During this step, the ribosome changes from the pre-translocational (PRE) to the post-translocational (POST) state as the newly formed A-site-bound peptidyl-tRNA and P-site-bound deacylated tRNA move to the P and E sites, respectively. Catalyzes the coordinated movement of the two tRNA molecules, the mRNA and conformational changes in the ribosome. The chain is Elongation factor 2 (EFT2) from Candida albicans (strain SC5314 / ATCC MYA-2876) (Yeast).